Here is a 317-residue protein sequence, read N- to C-terminus: Ribosomal protein L11 methyltransferase (317 aa).

Thr-158, Gly-179, Asp-201, and Asn-244 together coordinate S-adenosyl-L-methionine.

It belongs to the methyltransferase superfamily. PrmA family.

Its subcellular location is the cytoplasm. It carries out the reaction L-lysyl-[protein] + 3 S-adenosyl-L-methionine = N(6),N(6),N(6)-trimethyl-L-lysyl-[protein] + 3 S-adenosyl-L-homocysteine + 3 H(+). Methylates ribosomal protein L11. This is Ribosomal protein L11 methyltransferase from Streptococcus pyogenes serotype M49 (strain NZ131).